We begin with the raw amino-acid sequence, 390 residues long: Putative 2-isopropylmalate synthase (390 aa).

The Pyruvate carboxyltransferase domain occupies 5-267 (IIIFDTTLRD…KTNIKYQEIY (263 aa)). 4 residues coordinate Mn(2+): Asp14, His202, His204, and Asn238.

Belongs to the alpha-IPM synthase/homocitrate synthase family. LeuA type 1 subfamily. As to quaternary structure, homodimer. The cofactor is Mn(2+).

It localises to the cytoplasm. The enzyme catalyses 3-methyl-2-oxobutanoate + acetyl-CoA + H2O = (2S)-2-isopropylmalate + CoA + H(+). It functions in the pathway amino-acid biosynthesis; L-leucine biosynthesis; L-leucine from 3-methyl-2-oxobutanoate: step 1/4. Catalyzes the condensation of the acetyl group of acetyl-CoA with 3-methyl-2-oxobutanoate (2-ketoisovalerate) to form 3-carboxy-3-hydroxy-4-methylpentanoate (2-isopropylmalate). The chain is Putative 2-isopropylmalate synthase from Buchnera aphidicola subsp. Baizongia pistaciae (strain Bp).